Here is a 162-residue protein sequence, read N- to C-terminus: Podoplanin (162 aa).

The signal sequence occupies residues 1–22 (MWKVSALLFVLGSASLWVLAEG). Residues 23–57 (ASTGQPEDDTETTGLEGGVAMPGAEDDVVTPGTSE) are disordered. The Extracellular segment spans residues 23-131 (ASTGQPEDDT…EKDGLSTVTL (109 aa)). O-linked (GalNAc...) threonine glycosylation is found at Thr25, Thr32, Thr34, Thr35, Thr52, Thr55, Thr65, Thr66, Thr76, and Thr85. The span at 85–108 (TSESTVHAQEQSPSATASNVATSH) shows a compositional bias: polar residues. Residues 85–119 (TSESTVHAQEQSPSATASNVATSHSTEKVDGDTQT) form a disordered region. Ser86 and Ser88 each carry an O-linked (GalNAc...) serine glycan. Thr89 carries an O-linked (GalNAc...) threonine glycan. 2 O-linked (GalNAc...) serine glycosylation sites follow: Ser96 and Ser98. O-linked (GalNAc...) threonine glycosylation is present at Thr100. A glycan (O-linked (GalNAc...) serine) is linked at Ser102. Thr106 is a glycosylation site (O-linked (GalNAc...) threonine). O-linked (GalNAc...) serine glycans are attached at residues Ser107 and Ser109. Residues 109–119 (STEKVDGDTQT) show a composition bias toward basic and acidic residues. Thr110, Thr117, Thr119, and Thr120 each carry an O-linked (GalNAc...) threonine glycan. A helical transmembrane segment spans residues 132–152 (VGIIVGVLLAIGFIGAIIVVV). Residues 133–137 (GIIVG) are requires for dimerization and lipid rafts association. Residues 153-162 (MRKMSGRYSP) lie on the Cytoplasmic side of the membrane. The segment at 154 to 155 (RK) is requires for interaction with MSN and EZR.

It belongs to the podoplanin family. Homodimer. Interacts with CLEC1B; the interaction is independent of CLEC1B glycosylation and activates CLEC1B; the interaction is dependent of sialic acid on O-glycans. Interacts with CD9; this interaction is homophilic and attenuates platelet aggregation and pulmonary metastasis induced by PDPN. Interacts with LGALS8; the interaction is glycosylation-dependent; may participate in connection of the lymphatic endothelium to the surrounding extracellular matrix. Interacts with HSPA9. Interacts (via extracellular domain) with CD44; this interaction is required for PDPN-mediated directional migration and regulation of lamellipodia extension/stabilization during cell spreading and migration. Interacts (via cytoplasmic domain) with MSN and EZR; activates RHOA and promotes epithelial-mesenchymal transition. Interacts with CCL21; relocalized PDPN to the basolateral membrane. Extensively O-glycosylated. Contains sialic acid residues. O-glycosylation is necessary for platelet aggregation activity. Disialylated at Thr-52; sialic acid is critical for platelet-aggregating activity and for CLEC1B interaction. Post-translationally, the N-terminus is blocked. In terms of processing, cleaved by a metalloprotease within its extracellular (EC) domain, generating a membrane-bound C-terminal fragment (PCTF33) and an extracellular fragment. The resulting membrane-bound C-terminal fragment (PCTF33) is further processed between Val-150 and Val-151 by PSEN1/gamma-secretase generating the intracellular domain of podoplanin (PICD). In terms of tissue distribution, highly expressed in placenta, lung, skeletal muscle and brain. Weakly expressed in brain, kidney and liver. In placenta, expressed on the apical plasma membrane of endothelium. In lung, expressed in alveolar epithelium. Up-regulated in colorectal tumors and expressed in 25% of early oral squamous cell carcinomas.

It is found in the membrane. The protein localises to the cell projection. It localises to the lamellipodium membrane. Its subcellular location is the filopodium membrane. The protein resides in the microvillus membrane. It is found in the ruffle membrane. The protein localises to the membrane raft. It localises to the apical cell membrane. Its subcellular location is the basolateral cell membrane. The protein resides in the invadopodium. It is found in the cytoplasm. The protein localises to the cytosol. In terms of biological role, mediates effects on cell migration and adhesion through its different partners. During development plays a role in blood and lymphatic vessels separation by binding CLEC1B, triggering CLEC1B activation in platelets and leading to platelet activation and/or aggregation. Interaction with CD9, on the contrary, attenuates platelet aggregation induced by PDPN. Through MSN or EZR interaction promotes epithelial-mesenchymal transition (EMT) leading to ERZ phosphorylation and triggering RHOA activation leading to cell migration increase and invasiveness. Interaction with CD44 promotes directional cell migration in epithelial and tumor cells. In lymph nodes (LNs), controls fibroblastic reticular cells (FRCs) adhesion to the extracellular matrix (ECM) and contraction of the actomyosin by maintaining ERM proteins (EZR; MSN and RDX) and MYL9 activation through association with unknown transmembrane proteins. Engagement of CLEC1B by PDPN promotes FRCs relaxation by blocking lateral membrane interactions leading to reduction of ERM proteins (EZR; MSN and RDX) and MYL9 activation. Through binding with LGALS8 may participate in connection of the lymphatic endothelium to the surrounding extracellular matrix. In keratinocytes, induces changes in cell morphology showing an elongated shape, numerous membrane protrusions, major reorganization of the actin cytoskeleton, increased motility and decreased cell adhesion. Controls invadopodia stability and maturation leading to efficient degradation of the extracellular matrix (ECM) in tumor cells through modulation of RHOC activity in order to activate ROCK1/ROCK2 and LIMK1/LIMK2 and inactivation of CFL1. Required for normal lung cell proliferation and alveolus formation at birth. Does not function as a water channel or as a regulator of aquaporin-type water channels. Does not have any effect on folic acid or amino acid transport. The chain is Podoplanin from Homo sapiens (Human).